A 138-amino-acid polypeptide reads, in one-letter code: Ribonuclease kappa-A (138 aa).

An N-terminal signal peptide occupies residues 1–24 (MVLYFSPVLTFFLANFFNSKSTTT). Over 25-75 (ENLQVFLVENQHRDSKRKINPTFSKKGIEVRQQNENLWSKIVALRFDYSVW) the chain is Extracellular. A helical membrane pass occupies residues 76 to 96 (GIIQLVLMMGLFFYINSVALI). Residues 97 to 138 (EDLPIDEEFNSVEEFYTAATSAYNQNAYTVGLPVHLCAYASI) are Cytoplasmic-facing.

It belongs to the RNase K family.

It localises to the membrane. In terms of biological role, endoribonuclease. The polypeptide is Ribonuclease kappa-A (Ceratitis capitata (Mediterranean fruit fly)).